Consider the following 135-residue polypeptide: Small ribosomal subunit protein bS16 (135 aa).

Positions 94 to 135 (IGTEMETWQQRNDSRLKRGLDRKAIRRKRKKEAEAKEKESAG) are disordered. 2 stretches are compositionally biased toward basic and acidic residues: residues 105–116 (NDSRLKRGLDRK) and 124–135 (KEAEAKEKESAG).

The protein belongs to the bacterial ribosomal protein bS16 family.

This Chloroherpeton thalassium (strain ATCC 35110 / GB-78) protein is Small ribosomal subunit protein bS16.